The following is an 86-amino-acid chain: Anti-adapter protein IraP (86 aa).

Residues 1-36 adopt a coiled-coil conformation; sequence MKNLISELLLRLAQKEEESKELVAQVEALEIIVTAM.

Belongs to the IraP family. As to quaternary structure, interacts with RssB.

It localises to the cytoplasm. In terms of biological role, inhibits RpoS proteolysis by regulating RssB activity, thereby increasing the stability of the sigma stress factor RpoS especially during phosphate starvation, but also in stationary phase and during nitrogen starvation. Its effect on RpoS stability is due to its interaction with RssB, which probably blocks the interaction of RssB with RpoS, and the consequent delivery of the RssB-RpoS complex to the ClpXP protein degradation pathway. The sequence is that of Anti-adapter protein IraP from Citrobacter koseri (strain ATCC BAA-895 / CDC 4225-83 / SGSC4696).